The following is a 461-amino-acid chain: MVRELLEKARGLSMFTAYNTNVDAIVYLNGETVQRLIDEFGAEAVKRRMEEYPREINEPLDFVARLVHALKTGKPMAVPLVNEELQAWFDSHFKYDVERMGGQAGIIANLLANLDFREVLVYTPHLAKRQAEMFVKKPNLFYPVVEGGKLVLKHPWEAYRENDPVKVNRIFEFRAGTTFRLGNETITVPFSGRFIVSARFESIRIYTEPELKPFLPEIGQRVDGAILSGYQGIKLRYSDGKDANYYLREAKKDILLLKREKDVKVHLEFASIQNRELRKKVIYNLFPLVDSVGMDEAEIAYVLSALGYDKLAERIFTYNRIEDTVLGGKILIDEMNLELLQIHTIYYIMYIAHANNPLSEAELRQSLELATTLAASRASLGDIASPDQISVGMNVPYNERGEYVKLRFEEAKRRLRTKEYKLVIIPTRLVQNPVSTVGLGDTISTGAFTSYLAMLKEKGEL.

One can recognise an ADPK domain in the interval 1 to 457 (MVRELLEKAR…FTSYLAMLKE (457 aa)). Glu268, Glu298, and Asp441 together coordinate Mg(2+). Asp441 acts as the Proton acceptor in catalysis.

It belongs to the carbohydrate kinase PfkC family. The cofactor is Mg(2+).

The protein localises to the cytoplasm. It catalyses the reaction beta-D-fructose 6-phosphate + ADP = beta-D-fructose 1,6-bisphosphate + AMP + H(+). It participates in carbohydrate degradation; glycolysis. Catalyzes the phosphorylation of fructose 6-phosphate to fructose 1,6-bisphosphate using ADP as the phosphate donor. This Thermococcus kodakarensis (strain ATCC BAA-918 / JCM 12380 / KOD1) (Pyrococcus kodakaraensis (strain KOD1)) protein is ADP-specific phosphofructokinase.